The sequence spans 139 residues: uncharacterized protein (139 aa).

This is an uncharacterized protein from Halalkalibacterium halodurans (strain ATCC BAA-125 / DSM 18197 / FERM 7344 / JCM 9153 / C-125) (Bacillus halodurans).